The primary structure comprises 397 residues: Phosphoglycerate kinase (397 aa).

Substrate is bound by residues aspartate 21–asparagine 23, arginine 37, histidine 60–arginine 63, arginine 120, and arginine 153. Residues lysine 206, glycine 296, glutamate 327, and glycine 353 to serine 356 each bind ATP.

It belongs to the phosphoglycerate kinase family. Monomer.

The protein localises to the cytoplasm. The enzyme catalyses (2R)-3-phosphoglycerate + ATP = (2R)-3-phospho-glyceroyl phosphate + ADP. It functions in the pathway carbohydrate degradation; glycolysis; pyruvate from D-glyceraldehyde 3-phosphate: step 2/5. This is Phosphoglycerate kinase from Rhodopirellula baltica (strain DSM 10527 / NCIMB 13988 / SH1).